The sequence spans 147 residues: Large ribosomal subunit protein uL13 (147 aa).

It belongs to the universal ribosomal protein uL13 family. As to quaternary structure, part of the 50S ribosomal subunit.

Functionally, this protein is one of the early assembly proteins of the 50S ribosomal subunit, although it is not seen to bind rRNA by itself. It is important during the early stages of 50S assembly. In Kocuria rhizophila (strain ATCC 9341 / DSM 348 / NBRC 103217 / DC2201), this protein is Large ribosomal subunit protein uL13.